The primary structure comprises 450 residues: Glutamyl-tRNA reductase (450 aa).

Substrate-binding positions include 45-48, S107, 112-114, and Q118; these read TCNR and ERE. The active-site Nucleophile is C46. An NADP(+)-binding site is contributed by 196–201; sequence GTGAYA.

The protein belongs to the glutamyl-tRNA reductase family. Homodimer.

It catalyses the reaction (S)-4-amino-5-oxopentanoate + tRNA(Glu) + NADP(+) = L-glutamyl-tRNA(Glu) + NADPH + H(+). Its pathway is porphyrin-containing compound metabolism; protoporphyrin-IX biosynthesis; 5-aminolevulinate from L-glutamyl-tRNA(Glu): step 1/2. In terms of biological role, catalyzes the NADPH-dependent reduction of glutamyl-tRNA(Glu) to glutamate 1-semialdehyde (GSA). In Micrococcus luteus (strain ATCC 4698 / DSM 20030 / JCM 1464 / CCM 169 / CCUG 5858 / IAM 1056 / NBRC 3333 / NCIMB 9278 / NCTC 2665 / VKM Ac-2230) (Micrococcus lysodeikticus), this protein is Glutamyl-tRNA reductase.